Reading from the N-terminus, the 693-residue chain is Polyribonucleotide nucleotidyltransferase (693 aa).

Mg(2+)-binding residues include aspartate 486 and aspartate 492. Residues 553-612 (PRIHTIKINPEKIKDVIGKGGSVIRMLTEETGTTIEIEDDGTVKISAVMQEKAKCAIQRI) form the KH domain. The S1 motif domain maps to 622 to 690 (GSVYTGKVTR…RQGRLRLSIK (69 aa)).

This sequence belongs to the polyribonucleotide nucleotidyltransferase family. As to quaternary structure, component of the RNA degradosome, which is a multiprotein complex involved in RNA processing and mRNA degradation. Requires Mg(2+) as cofactor.

The protein resides in the cytoplasm. It carries out the reaction RNA(n+1) + phosphate = RNA(n) + a ribonucleoside 5'-diphosphate. Functionally, involved in mRNA degradation. Catalyzes the phosphorolysis of single-stranded polyribonucleotides processively in the 3'- to 5'-direction. In Buchnera aphidicola subsp. Baizongia pistaciae (strain Bp), this protein is Polyribonucleotide nucleotidyltransferase.